We begin with the raw amino-acid sequence, 276 residues long: Elongation factor Ts (276 aa).

The tract at residues 81-84 (TDFV) is involved in Mg(2+) ion dislocation from EF-Tu.

This sequence belongs to the EF-Ts family.

It is found in the cytoplasm. Functionally, associates with the EF-Tu.GDP complex and induces the exchange of GDP to GTP. It remains bound to the aminoacyl-tRNA.EF-Tu.GTP complex up to the GTP hydrolysis stage on the ribosome. The chain is Elongation factor Ts from Leifsonia xyli subsp. xyli (strain CTCB07).